We begin with the raw amino-acid sequence, 145 residues long: Ribosomal RNA large subunit methyltransferase H (145 aa).

Residues Gly-94 and 113–118 contribute to the S-adenosyl-L-methionine site; that span reads LSPLTF.

The protein belongs to the RNA methyltransferase RlmH family. Homodimer.

It is found in the cytoplasm. It carries out the reaction pseudouridine(1915) in 23S rRNA + S-adenosyl-L-methionine = N(3)-methylpseudouridine(1915) in 23S rRNA + S-adenosyl-L-homocysteine + H(+). In terms of biological role, specifically methylates the pseudouridine at position 1915 (m3Psi1915) in 23S rRNA. The polypeptide is Ribosomal RNA large subunit methyltransferase H (Sorangium cellulosum (strain So ce56) (Polyangium cellulosum (strain So ce56))).